The chain runs to 303 residues: Quinolinate synthase (303 aa).

Residues His24 and Ser41 each coordinate iminosuccinate. Cys86 provides a ligand contact to [4Fe-4S] cluster. Iminosuccinate contacts are provided by residues 112–114 and Ser129; that span reads YIN. Cys172 contacts [4Fe-4S] cluster. Residues 198 to 200 and Thr215 each bind iminosuccinate; that span reads HPE. A [4Fe-4S] cluster-binding site is contributed by Cys260.

It belongs to the quinolinate synthase family. Type 2 subfamily. [4Fe-4S] cluster serves as cofactor.

The protein localises to the cytoplasm. The catalysed reaction is iminosuccinate + dihydroxyacetone phosphate = quinolinate + phosphate + 2 H2O + H(+). It participates in cofactor biosynthesis; NAD(+) biosynthesis; quinolinate from iminoaspartate: step 1/1. In terms of biological role, catalyzes the condensation of iminoaspartate with dihydroxyacetone phosphate to form quinolinate. This chain is Quinolinate synthase, found in Caldicellulosiruptor bescii (strain ATCC BAA-1888 / DSM 6725 / KCTC 15123 / Z-1320) (Anaerocellum thermophilum).